The primary structure comprises 162 residues: Large ribosomal subunit protein uL10 (162 aa).

The protein belongs to the universal ribosomal protein uL10 family. Part of the ribosomal stalk of the 50S ribosomal subunit. The N-terminus interacts with L11 and the large rRNA to form the base of the stalk. The C-terminus forms an elongated spine to which L12 dimers bind in a sequential fashion forming a multimeric L10(L12)X complex.

Forms part of the ribosomal stalk, playing a central role in the interaction of the ribosome with GTP-bound translation factors. The protein is Large ribosomal subunit protein uL10 of Borrelia duttonii (strain Ly).